The sequence spans 365 residues: Eukaryotic translation initiation factor 3 subunit H (365 aa).

The 150-residue stretch at 11 to 160 (VQVEALVVMK…LRAFRLSPQF (150 aa)) folds into the MPN domain. The stretch at 273–303 (YQRSLAREQTKIAAWQAKRKAENATRAQLKQ) forms a coiled coil.

The protein belongs to the eIF-3 subunit H family. As to quaternary structure, component of the eukaryotic translation initiation factor 3 (eIF-3) complex.

The protein localises to the cytoplasm. In terms of biological role, component of the eukaryotic translation initiation factor 3 (eIF-3) complex, which is involved in protein synthesis of a specialized repertoire of mRNAs and, together with other initiation factors, stimulates binding of mRNA and methionyl-tRNAi to the 40S ribosome. The eIF-3 complex specifically targets and initiates translation of a subset of mRNAs involved in cell proliferation. This is Eukaryotic translation initiation factor 3 subunit H from Coccidioides immitis (strain RS) (Valley fever fungus).